The chain runs to 314 residues: Thymidylate synthase (314 aa).

DUMP-binding positions include arginine 21 and 176–177 (RR). Catalysis depends on cysteine 196, which acts as the Nucleophile. DUMP contacts are provided by residues 216-219 (RSAD), asparagine 227, and 257-259 (HLY). Residue aspartate 219 participates in (6R)-5,10-methylene-5,6,7,8-tetrahydrofolate binding. Serine 313 provides a ligand contact to (6R)-5,10-methylene-5,6,7,8-tetrahydrofolate.

The protein belongs to the thymidylate synthase family. Bacterial-type ThyA subfamily. As to quaternary structure, homodimer.

The protein resides in the cytoplasm. The catalysed reaction is dUMP + (6R)-5,10-methylene-5,6,7,8-tetrahydrofolate = 7,8-dihydrofolate + dTMP. The protein operates within pyrimidine metabolism; dTTP biosynthesis. In terms of biological role, catalyzes the reductive methylation of 2'-deoxyuridine-5'-monophosphate (dUMP) to 2'-deoxythymidine-5'-monophosphate (dTMP) while utilizing 5,10-methylenetetrahydrofolate (mTHF) as the methyl donor and reductant in the reaction, yielding dihydrofolate (DHF) as a by-product. This enzymatic reaction provides an intracellular de novo source of dTMP, an essential precursor for DNA biosynthesis. The polypeptide is Thymidylate synthase (Listeria monocytogenes serotype 4b (strain CLIP80459)).